Here is a 304-residue protein sequence, read N- to C-terminus: uncharacterized protein (304 aa).

Coiled-coil stretches lie at residues 3 to 35 (KNQYISQNMENKEIENKEIENKKTDSKEFDKEI) and 89 to 132 (KSNK…NSNL). Positions 96–121 (LQNKQQENSEEKNSEEKNSEEKNSEE) are disordered.

This is an uncharacterized protein from Acanthamoeba polyphaga (Amoeba).